We begin with the raw amino-acid sequence, 349 residues long: DNA-directed RNA polymerase subunit alpha (349 aa).

The segment at 1 to 226 (MLIAQRPTLV…GLFGLAQELN (226 aa)) is alpha N-terminal domain (alpha-NTD). Residues 241-349 (AALAADLALP…GAEFVETEQY (109 aa)) are alpha C-terminal domain (alpha-CTD). The interval 308-349 (LKDSPPGFDPRQAVDTYGTDSYNPAFSDPSDDGAEFVETEQY) is disordered. Positions 336-349 (PSDDGAEFVETEQY) are enriched in acidic residues.

The protein belongs to the RNA polymerase alpha chain family. As to quaternary structure, homodimer. The RNAP catalytic core consists of 2 alpha, 1 beta, 1 beta' and 1 omega subunit. When a sigma factor is associated with the core the holoenzyme is formed, which can initiate transcription.

The catalysed reaction is RNA(n) + a ribonucleoside 5'-triphosphate = RNA(n+1) + diphosphate. Functionally, DNA-dependent RNA polymerase catalyzes the transcription of DNA into RNA using the four ribonucleoside triphosphates as substrates. The chain is DNA-directed RNA polymerase subunit alpha from Frankia alni (strain DSM 45986 / CECT 9034 / ACN14a).